The chain runs to 258 residues: Phosphate import ATP-binding protein PstB 3 (258 aa).

The ABC transporter domain maps to 10 to 253; sequence MTARSLAVHY…PANSLTQGYI (244 aa). 42–49 contacts ATP; it reads GPSGCGKS.

The protein belongs to the ABC transporter superfamily. Phosphate importer (TC 3.A.1.7) family. As to quaternary structure, the complex is composed of two ATP-binding proteins (PstB), two transmembrane proteins (PstC and PstA) and a solute-binding protein (PstS).

It localises to the cell inner membrane. It carries out the reaction phosphate(out) + ATP + H2O = ADP + 2 phosphate(in) + H(+). Part of the ABC transporter complex PstSACB involved in phosphate import. Responsible for energy coupling to the transport system. This chain is Phosphate import ATP-binding protein PstB 3, found in Paramagnetospirillum magneticum (strain ATCC 700264 / AMB-1) (Magnetospirillum magneticum).